The primary structure comprises 188 residues: Molybdopterin synthase catalytic subunit (188 aa).

Positions Met-1–Thr-10 are enriched in polar residues. The disordered stretch occupies residues Met-1–Thr-21. Substrate is bound by residues His-123–Arg-124, Lys-139, and Lys-146–Glu-148.

This sequence belongs to the MoaE family. MOCS2B subfamily. As to quaternary structure, heterotetramer; composed of 2 small (MOCS2A) and 2 large (MOCS2B) subunits.

It is found in the cytoplasm. It carries out the reaction 2 [molybdopterin-synthase sulfur-carrier protein]-C-terminal-Gly-aminoethanethioate + cyclic pyranopterin phosphate + H2O = molybdopterin + 2 [molybdopterin-synthase sulfur-carrier protein]-C-terminal Gly-Gly + 2 H(+). The protein operates within cofactor biosynthesis; molybdopterin biosynthesis. Catalytic subunit of the molybdopterin synthase complex, a complex that catalyzes the conversion of precursor Z into molybdopterin. Acts by mediating the incorporation of 2 sulfur atoms from thiocarboxylated MOCS2A into precursor Z to generate a dithiolene group. The chain is Molybdopterin synthase catalytic subunit from Phaeosphaeria nodorum (strain SN15 / ATCC MYA-4574 / FGSC 10173) (Glume blotch fungus).